A 599-amino-acid chain; its full sequence is Elongation factor 4 (599 aa).

Positions 5–187 constitute a tr-type G domain; that stretch reads SHIRNFSIIA…RLVHTIPAPV (183 aa). GTP-binding positions include 17–22 and 134–137; these read DHGKST and NKMD.

The protein belongs to the TRAFAC class translation factor GTPase superfamily. Classic translation factor GTPase family. LepA subfamily.

It localises to the cell inner membrane. The catalysed reaction is GTP + H2O = GDP + phosphate + H(+). Functionally, required for accurate and efficient protein synthesis under certain stress conditions. May act as a fidelity factor of the translation reaction, by catalyzing a one-codon backward translocation of tRNAs on improperly translocated ribosomes. Back-translocation proceeds from a post-translocation (POST) complex to a pre-translocation (PRE) complex, thus giving elongation factor G a second chance to translocate the tRNAs correctly. Binds to ribosomes in a GTP-dependent manner. The protein is Elongation factor 4 of Pseudomonas putida (strain W619).